We begin with the raw amino-acid sequence, 370 residues long: MAGFFSLDGGGGGGGGGGNNQEDHRSNTNPPPPVSEAWLWYRNPNVNANANTNVNANAPSSSNAALGTLELWQNHNQQEIMFQHQQHQQRLDLYSSAAGLGVGPSNHNQFDISGETSTAGAGRAAAMMMIRSGGSGGGSGGVSCQDCGNQAKKDCSHMRCRTCCKSRGFECSTHVRSTWVPAAKRRERQQQLATVQPQTQLPRGESVPKRHRENLPATSSSLVCTRIPSHSGLEVGNFPAEVSSSAVFRCVRVSSVEDGEEEFAYQTAVSIGGHIFKGILYDLGPGSSGGGGYNVVAAGESSSGGGGAQQLNLITAGSVTVATASSSTPNLGGIGSSSAAAATYIDPAALYPTPINTFMAGTQFFPNPRS.

The disordered stretch occupies residues 1–37; that stretch reads MAGFFSLDGGGGGGGGGGNNQEDHRSNTNPPPPVSEA. Positions 8–19 are enriched in gly residues; that stretch reads DGGGGGGGGGGN. Residues cysteine 144, cysteine 147, cysteine 155, cysteine 160, cysteine 164, and cysteine 171 each contribute to the Zn(2+) site. Positions 144 to 171 form a DNA-binding region, zn(2)-C6 fungal-type; degenerate; that stretch reads CQDCGNQAKKDCSHMRCRTCCKSRGFEC. A Required for homo- and heterodimerization motif is present at residues 271-274; sequence IGGH.

Belongs to the SHI protein family. As to quaternary structure, forms homodimers and heterodimers with LRP1. Expressed in flowers, seeds and seedlings.

The protein localises to the nucleus. Its function is as follows. Transcription activator that binds DNA on 5'-ACTCTAC-3' and promotes auxin homeostasis-regulating gene expression (e.g. YUC genes), as well as genes affecting stamen development, cell expansion and timing of flowering. Synergistically with other SHI-related proteins, regulates gynoecium, stamen and leaf development in a dose-dependent manner, controlling apical-basal patterning. Promotes style and stigma formation, and influences vascular development during gynoecium development. May also have a role in the formation and/or maintenance of the shoot apical meristem (SAM). The protein is Protein SHI RELATED SEQUENCE 1 (SRS1) of Arabidopsis thaliana (Mouse-ear cress).